Here is a 775-residue protein sequence, read N- to C-terminus: MASLIYRQLLTNSYSVDLHDEIEQIGSEKTQNVTVNPGPFAQTRYAPVNWGHGEINDSTTVELILDGPYQPTTFTPPIDYWILINSNTNGVVYESTNNSDFWTAVVAVEPHVSPVDRQYTVFGENKQFNVRNDSDKWKFLEMFRSSSQNEFYNRRTLTSDTKLVGILRYGGRIWTFHGETPRVNTDSSHNANLNDISIVIHSGFYIIPRSQECKCNEYINNGLPPIPNTRNVVPLSLSSRSIQYKRAQVNEDITISKTSLWKECTIIRDIIIRFKFGNSIVKLGGLGYKWSEISYKAANYQYNYLRDGEQVTAHTTCSVNGVNNFSYNGGFLPTDFSVSRYEVIKENSYVYVDYWDDSKAFRNMVYVRSLAANLNSVKCTGGSYDFSIPVGAWPVITGGAVSLHFAGVTLSTQFTDFVSLNSLRFRFSKTVDEPSFSILRTRTVNLYGLPAANPNNGNEYYEISGRFSLISLVPTNDDYQTPIMNSVTVRQDLERQLTDLREEFNSLSQEIAMSQLIDLALLPLDMFSMFSGIKSTIDLTKSMATSVMKKFRKSKLATSISEMTNSLSDAASSASRSVSIRSNISTISNWTNVSNDVSNVTNSLNDISTQTSTISKNLRLKEMITPTEGMSLDDISAAVLKTKIDMSTPIGKNTLPDIVPEASEKFIPKRSFRILKDDEVMEINTEGDVFAYKIDTLNEVPFDVNKFAELVTNSPVISAIIDFKTLKNLNDNYGITRIEALNLIKSNPNVLRDFINQNNPIIRNRIEQLILQCKL.

Residues 65–223 (LDGPYQPTTF…KCNEYINNGL (159 aa)) are spike head. The interval 247–478 (AQVNEDITIS…LISLVPTNDD (232 aa)) is spike body and stalk (antigen domain). A DGE motif; interaction with ITGA2/ITGB1 heterodimer motif is present at residues 307-309 (DGE). Residues C317 and C379 are joined by a disulfide bond. The tract at residues 388–408 (IPVGAWPVITGGAVSLHFAGV) is hydrophobic; possible role in virus entry into host cell. Residues 447-449 (YGL) carry the YGL motif; interaction with ITGA4 motif. Positions 483-510 (IMNSVTVRQDLERQLTDLREEFNSLSQE) form a coiled coil. The interval 509–775 (QEIAMSQLID…IEQLILQCKL (267 aa)) is spike foot. Residues 643-645 (KID) carry the KID motif; interaction with HSPA8 motif.

It belongs to the rotavirus VP4 family. In terms of assembly, homotrimer. VP4 adopts a dimeric appearance above the capsid surface, while forming a trimeric base anchored inside the capsid layer. Only hints of the third molecule are observed above the capsid surface. It probably performs a series of molecular rearrangements during viral entry. Prior to trypsin cleavage, it is flexible. The priming trypsin cleavage triggers its rearrangement into rigid spikes with approximate two-fold symmetry of their protruding parts. After an unknown second triggering event, cleaved VP4 may undergo another rearrangement, in which two VP5* subunits fold back on themselves and join a third subunit to form a tightly associated trimer, shaped like a folded umbrella. Interacts with VP6. Interacts with VP7. Homotrimer. The trimer is coiled-coil stabilized by its C-terminus, however, its N-terminus, known as antigen domain or 'body', seems to be flexible allowing it to self-associate either as a dimer or a trimer. In terms of processing, proteolytic cleavage by trypsin results in activation of VP4 functions and greatly increases infectivity. The penetration into the host cell is dependent on trypsin treatment of VP4. It produces two peptides, VP5* and VP8* that remain associated with the virion. Cleavage of VP4 by trypsin probably occurs in vivo in the lumen of the intestine prior to infection of enterocytes. Trypsin seems to be incorporated into the three-layered viral particles but remains inactive as long as the viral outer capsid is intact and would only be activated upon the solubilization of the latter.

Its subcellular location is the virion. The protein localises to the host rough endoplasmic reticulum. It is found in the host cell membrane. The protein resides in the host cytoplasm. It localises to the host cytoskeleton. Its subcellular location is the host endoplasmic reticulum-Golgi intermediate compartment. Its function is as follows. Spike-forming protein that mediates virion attachment to the host epithelial cell receptors and plays a major role in cell penetration, determination of host range restriction and virulence. Rotavirus attachment and entry into the host cell probably involves multiple sequential contacts between the outer capsid proteins VP4 and VP7, and the cell receptors. It is subsequently lost, together with VP7, following virus entry into the host cell. Following entry into the host cell, low intracellular or intravesicular Ca(2+) concentration probably causes the calcium-stabilized VP7 trimers to dissociate from the virion. This step is probably necessary for the membrane-disrupting entry step and the release of VP4, which is locked onto the virion by VP7. During the virus exit from the host cell, VP4 seems to be required to target the newly formed virions to the host cell lipid rafts. Forms the spike 'foot' and 'body' and acts as a membrane permeabilization protein that mediates release of viral particles from endosomal compartments into the cytoplasm. During entry, the part of VP5* that protrudes from the virus folds back on itself and reorganizes from a local dimer to a trimer. This reorganization may be linked to membrane penetration by exposing VP5* hydrophobic region. In integrin-dependent strains, VP5* targets the integrin heterodimer ITGA2/ITGB1 for cell attachment. In terms of biological role, forms the head of the spikes and mediates the recognition of specific host cell surface glycans. It is the viral hemagglutinin and an important target of neutralizing antibodies. In sialic acid-dependent strains, VP8* binds to host cell sialic acid, most probably a ganglioside, providing the initial contact. In some other strains, VP8* mediates the attachment to histo-blood group antigens (HBGAs) for viral entry. This Rotavirus A (strain RVA/Human/Japan/MO/1982/G3P1A[8]) (RV-A) protein is Outer capsid protein VP4.